Reading from the N-terminus, the 475-residue chain is Trifunctional enzyme subunit beta, mitochondrial (475 aa).

A mitochondrion-targeting transit peptide spans 1-34 (MTTILTSTFRNLSTTSKWALRSSIRPLSCSSQLH). Position 53 is an N6-succinyllysine (Lys-53). At Lys-73 the chain carries N6-acetyllysine; alternate. N6-succinyllysine; alternate is present on Lys-73. Catalysis depends on Cys-139, which acts as the Acyl-thioester intermediate. The stretch at 174–221 (IRHSRNMRKMMLDLNKAKTLGQRLSLLSKFRLNFLSPELPAVAEFSTN) is an intramembrane region. Lys-189 is subject to N6-acetyllysine; alternate. Position 189 is an N6-succinyllysine; alternate (Lys-189). N6-succinyllysine occurs at positions 191, 273, and 292. Lys-294 carries the N6-acetyllysine; alternate modification. At Lys-294 the chain carries N6-succinyllysine; alternate. Position 299 is an N6-acetyllysine (Lys-299). N6-acetyllysine; alternate is present on Lys-333. Lys-333 is modified (N6-succinyllysine; alternate). Residues Lys-349 and Lys-362 each carry the N6-acetyllysine modification. The active-site Proton donor/acceptor is Cys-459.

Belongs to the thiolase-like superfamily. Thiolase family. In terms of assembly, heterotetramer of 2 alpha/HADHA and 2 beta/HADHB subunits; forms the mitochondrial trifunctional enzyme. Also purified as higher order heterooligomers including a 4 alpha/HADHA and 4 beta/HADHB heterooligomer which physiological significance remains unclear. The mitochondrial trifunctional enzyme interacts with MTLN. Interacts with RSAD2/viperin. Post-translationally, acetylation of Lys-202 is observed in liver mitochondria from fasted mice but not from fed mice.

The protein localises to the mitochondrion. The protein resides in the mitochondrion inner membrane. Its subcellular location is the mitochondrion outer membrane. It localises to the endoplasmic reticulum. The enzyme catalyses an acyl-CoA + acetyl-CoA = a 3-oxoacyl-CoA + CoA. It carries out the reaction butanoyl-CoA + acetyl-CoA = 3-oxohexanoyl-CoA + CoA. The catalysed reaction is hexanoyl-CoA + acetyl-CoA = 3-oxooctanoyl-CoA + CoA. It catalyses the reaction octanoyl-CoA + acetyl-CoA = 3-oxodecanoyl-CoA + CoA. The enzyme catalyses decanoyl-CoA + acetyl-CoA = 3-oxododecanoyl-CoA + CoA. It carries out the reaction dodecanoyl-CoA + acetyl-CoA = 3-oxotetradecanoyl-CoA + CoA. The catalysed reaction is tetradecanoyl-CoA + acetyl-CoA = 3-oxohexadecanoyl-CoA + CoA. It functions in the pathway lipid metabolism; fatty acid beta-oxidation. Functionally, mitochondrial trifunctional enzyme catalyzes the last three of the four reactions of the mitochondrial beta-oxidation pathway. The mitochondrial beta-oxidation pathway is the major energy-producing process in tissues and is performed through four consecutive reactions breaking down fatty acids into acetyl-CoA. Among the enzymes involved in this pathway, the trifunctional enzyme exhibits specificity for long-chain fatty acids. Mitochondrial trifunctional enzyme is a heterotetrameric complex composed of two proteins, the trifunctional enzyme subunit alpha/HADHA carries the 2,3-enoyl-CoA hydratase and the 3-hydroxyacyl-CoA dehydrogenase activities, while the trifunctional enzyme subunit beta/HADHB described here bears the 3-ketoacyl-CoA thiolase activity. The protein is Trifunctional enzyme subunit beta, mitochondrial (Hadhb) of Mus musculus (Mouse).